A 361-amino-acid polypeptide reads, in one-letter code: Peptide chain release factor 1 (361 aa).

Q233 is modified (N5-methylglutamine). Residues 282 to 310 are disordered; that stretch reads SKKQAERAQNRKSQVGSGDRSERIRTYNF.

This sequence belongs to the prokaryotic/mitochondrial release factor family. Post-translationally, methylated by PrmC. Methylation increases the termination efficiency of RF1.

Its subcellular location is the cytoplasm. In terms of biological role, peptide chain release factor 1 directs the termination of translation in response to the peptide chain termination codons UAG and UAA. The protein is Peptide chain release factor 1 of Treponema denticola (strain ATCC 35405 / DSM 14222 / CIP 103919 / JCM 8153 / KCTC 15104).